The sequence spans 299 residues: Ribosomal RNA small subunit methyltransferase H (299 aa).

Residues 35-37 (GGH), aspartate 54, tyrosine 80, aspartate 101, and glutamine 108 contribute to the S-adenosyl-L-methionine site.

Belongs to the methyltransferase superfamily. RsmH family.

It localises to the cytoplasm. It carries out the reaction cytidine(1402) in 16S rRNA + S-adenosyl-L-methionine = N(4)-methylcytidine(1402) in 16S rRNA + S-adenosyl-L-homocysteine + H(+). Functionally, specifically methylates the N4 position of cytidine in position 1402 (C1402) of 16S rRNA. The protein is Ribosomal RNA small subunit methyltransferase H of Coprothermobacter proteolyticus (strain ATCC 35245 / DSM 5265 / OCM 4 / BT).